The sequence spans 184 residues: Ribosome-recycling factor (184 aa).

The protein belongs to the RRF family.

The protein localises to the cytoplasm. In terms of biological role, responsible for the release of ribosomes from messenger RNA at the termination of protein biosynthesis. May increase the efficiency of translation by recycling ribosomes from one round of translation to another. In Borreliella afzelii (strain PKo) (Borrelia afzelii), this protein is Ribosome-recycling factor.